Reading from the N-terminus, the 356-residue chain is Putative methylthioribose-1-phosphate isomerase (356 aa).

Residues 57-59, Arg100, and Gln206 each bind substrate; that span reads RGA. Residue Asp247 is the Proton donor of the active site. 257-258 contacts substrate; that stretch reads NK.

This sequence belongs to the eIF-2B alpha/beta/delta subunits family. MtnA subfamily.

The catalysed reaction is 5-(methylsulfanyl)-alpha-D-ribose 1-phosphate = 5-(methylsulfanyl)-D-ribulose 1-phosphate. Its function is as follows. Catalyzes the interconversion of methylthioribose-1-phosphate (MTR-1-P) into methylthioribulose-1-phosphate (MTRu-1-P). The polypeptide is Putative methylthioribose-1-phosphate isomerase (aIF-2BI) (Pyrococcus abyssi (strain GE5 / Orsay)).